The chain runs to 408 residues: Acetylornithine/succinyldiaminopimelate aminotransferase (408 aa).

Pyridoxal 5'-phosphate-binding positions include 108–109 and Phe-141; that span reads GA. Residue Arg-144 participates in N(2)-acetyl-L-ornithine binding. 226–229 is a pyridoxal 5'-phosphate binding site; it reads DEIQ. Lys-255 is subject to N6-(pyridoxal phosphate)lysine. Thr-283 is a binding site for N(2)-acetyl-L-ornithine. Thr-284 is a binding site for pyridoxal 5'-phosphate.

It belongs to the class-III pyridoxal-phosphate-dependent aminotransferase family. ArgD subfamily. In terms of assembly, homodimer. Pyridoxal 5'-phosphate is required as a cofactor.

The protein localises to the cytoplasm. It carries out the reaction N(2)-acetyl-L-ornithine + 2-oxoglutarate = N-acetyl-L-glutamate 5-semialdehyde + L-glutamate. The catalysed reaction is N-succinyl-(2S,6S)-2,6-diaminopimelate + 2-oxoglutarate = (S)-2-succinylamino-6-oxoheptanedioate + L-glutamate. It functions in the pathway amino-acid biosynthesis; L-arginine biosynthesis; N(2)-acetyl-L-ornithine from L-glutamate: step 4/4. Its pathway is amino-acid biosynthesis; L-lysine biosynthesis via DAP pathway; LL-2,6-diaminopimelate from (S)-tetrahydrodipicolinate (succinylase route): step 2/3. In terms of biological role, involved in both the arginine and lysine biosynthetic pathways. In Buchnera aphidicola subsp. Acyrthosiphon pisum (strain APS) (Acyrthosiphon pisum symbiotic bacterium), this protein is Acetylornithine/succinyldiaminopimelate aminotransferase.